Consider the following 767-residue polypeptide: DNA topoisomerase 1 (767 aa).

Over residues 1-23 the composition is skewed to basic and acidic residues; sequence MSGDHLHNDSQIEADFRLNDSHK. The disordered stretch occupies residues 1–200; the sequence is MSGDHLHNDS…DNKKKKAKKE (200 aa). At Ser2 the chain carries N-acetylserine. Phosphoserine occurs at positions 2 and 10. Positions 24-39 are enriched in basic residues; it reads HKDKHKDREHRHKEHK. The span at 40 to 110 shows a compositional bias: basic and acidic residues; it reads KDKDKDREKS…DAKIKKEKEN (71 aa). Ser59 is subject to Phosphoserine. Lys103 is covalently cross-linked (Glycyl lysine isopeptide (Lys-Gly) (interchain with G-Cter in SUMO2)). Lys105 participates in a covalent cross-link: Glycyl lysine isopeptide (Lys-Gly) (interchain with G-Cter in SUMO); alternate. Residue Lys105 forms a Glycyl lysine isopeptide (Lys-Gly) (interchain with G-Cter in SUMO2); alternate linkage. Ser114 is modified (phosphoserine). Lys119 is covalently cross-linked (Glycyl lysine isopeptide (Lys-Gly) (interchain with G-Cter in SUMO); alternate). Lys119 participates in a covalent cross-link: Glycyl lysine isopeptide (Lys-Gly) (interchain with G-Cter in SUMO2); alternate. Residue Lys119 forms a Glycyl lysine isopeptide (Lys-Gly) (interchain with G-Cter in SUMO1); alternate linkage. Residues 131-168 show a composition bias toward basic and acidic residues; it reads PKEDIKPLKRPRDEDDADYKPKKIKTEDIKKEKKRKLE. Residues Lys136 and Lys150 each participate in a glycyl lysine isopeptide (Lys-Gly) (interchain with G-Cter in SUMO2) cross-link. A Glycyl lysine isopeptide (Lys-Gly) (interchain with G-Cter in SUMO); alternate cross-link involves residue Lys155. Lys155 participates in a covalent cross-link: Glycyl lysine isopeptide (Lys-Gly) (interchain with G-Cter in SUMO2); alternate. Glycyl lysine isopeptide (Lys-Gly) (interchain with G-Cter in SUMO2) cross-links involve residues Lys160 and Lys166. Residue Lys174 forms a Glycyl lysine isopeptide (Lys-Gly) (interchain with G-Cter in SUMO2); alternate linkage. Residue Lys174 is modified to N6-acetyllysine; alternate. A compositionally biased stretch (basic and acidic residues) spans 181 to 200; it reads KDKDKKVAEPDNKKKKAKKE. Lys206 participates in a covalent cross-link: Glycyl lysine isopeptide (Lys-Gly) (interchain with G-Cter in SUMO2). Residue Lys282 is modified to N6-acetyllysine. Lys338 participates in a covalent cross-link: Glycyl lysine isopeptide (Lys-Gly) (interchain with G-Cter in SUMO2). 2 interaction with DNA regions span residues 427–428 and 490–495; these read KY and RAGNEK. The 334-residue stretch at 434–767 folds into the Topo IB-type catalytic domain; sequence SSRIKGEKDW…IDMTDEDYEF (334 aa). Position 508 is a phosphoserine; by CK2 (Ser508). Lys551 participates in a covalent cross-link: Glycyl lysine isopeptide (Lys-Gly) (interchain with G-Cter in SUMO2). The tract at residues 587-589 is interaction with DNA; that stretch reads TAK. Glycyl lysine isopeptide (Lys-Gly) (interchain with G-Cter in SUMO2) cross-links involve residues Lys644, Lys702, and Lys714. The active-site O-(3'-phospho-DNA)-tyrosine intermediate is the Tyr725.

The protein belongs to the type IB topoisomerase family. As to quaternary structure, monomer. Interacts with ERCC6. Interacts with TPRN; TPRN interacts with a number of DNA damage response proteins, is recruited to sites of DNA damage and may play a role in DNA damage repair. Sumoylated. Lys-119 is the main site of sumoylation. Sumoylation plays a role in partitioning TOP1 between nucleoli and nucleoplasm. Levels are dramatically increased on camptothecin (CPT) treatment. In terms of processing, phosphorylation at Ser-508 by CK2 increases binding to supercoiled DNA and sensitivity to camptothecin.

The protein localises to the nucleus. The protein resides in the nucleolus. It is found in the nucleoplasm. It catalyses the reaction ATP-independent breakage of single-stranded DNA, followed by passage and rejoining.. Releases the supercoiling and torsional tension of DNA introduced during the DNA replication and transcription by transiently cleaving and rejoining one strand of the DNA duplex. Introduces a single-strand break via transesterification at a target site in duplex DNA. The scissile phosphodiester is attacked by the catalytic tyrosine of the enzyme, resulting in the formation of a DNA-(3'-phosphotyrosyl)-enzyme intermediate and the expulsion of a 5'-OH DNA strand. The free DNA strand then rotates around the intact phosphodiester bond on the opposing strand, thus removing DNA supercoils. Finally, in the religation step, the DNA 5'-OH attacks the covalent intermediate to expel the active-site tyrosine and restore the DNA phosphodiester backbone. Regulates the alternative splicing of tissue factor (F3) pre-mRNA in endothelial cells. Involved in the circadian transcription of the core circadian clock component BMAL1 by altering the chromatin structure around the ROR response elements (ROREs) on the BMAL1 promoter. The polypeptide is DNA topoisomerase 1 (Top1) (Rattus norvegicus (Rat)).